Reading from the N-terminus, the 39-residue chain is Phosphatase RapI inhibitor (39 aa).

The propeptide occupies 1 to 34; the sequence is MKISRILLAAVILSSVFSITYLQSDHNTEIKVAA.

Belongs to the Phr family. Post-translationally, contains a predicted signal peptide cleavage site in the N-terminal region, however the propeptide is probably subject to only one processing event, at the N-terminal end of the mature peptide.

Its subcellular location is the secreted. It localises to the cytoplasm. Its function is as follows. Intercellular signaling molecule that inhibits excision of the mobile genetic element ICEBs1 when cells are crowded by cells that contain ICEBs1 and produce the PhrI peptide. Secreted during production, but the mature peptide acts intracellularly, indicating that it needs to be imported into the cell to function. Acts by inhibiting RapI activity. The polypeptide is Phosphatase RapI inhibitor (phrI) (Bacillus subtilis (strain 168)).